Here is a 294-residue protein sequence, read N- to C-terminus: tRNA pseudouridine synthase B (294 aa).

The active-site Nucleophile is Asp39.

The protein belongs to the pseudouridine synthase TruB family. Type 1 subfamily.

It catalyses the reaction uridine(55) in tRNA = pseudouridine(55) in tRNA. In terms of biological role, responsible for synthesis of pseudouridine from uracil-55 in the psi GC loop of transfer RNAs. The chain is tRNA pseudouridine synthase B from Streptococcus agalactiae serotype Ia (strain ATCC 27591 / A909 / CDC SS700).